Here is a 294-residue protein sequence, read N- to C-terminus: Single-stranded nucleic acid-binding protein (294 aa).

Positions 1–30 are disordered; that stretch reads MSAEIEEATNAVNNLSINDSEQQPRAPTHK. S2 bears the N-acetylserine mark. Phosphoserine occurs at positions 2 and 16. A compositionally biased stretch (polar residues) spans 10–25; that stretch reads NAVNNLSINDSEQQPR. The RRM 1 domain maps to 37–119; the sequence is DTIFIGNVAH…REIHIKRART (83 aa). Phosphothreonine is present on T49. A Phosphoserine modification is found at S66. Phosphothreonine is present on residues T91 and T119. R125 carries the post-translational modification Omega-N-methylarginine. The tract at residues 131–151 is RNA-binding RGG-box; it reads RGGFRGRGGFRGGFRGGYRGG. 3 positions are modified to dimethylated arginine: R135, R137, and R141. R145 bears the Dimethylated arginine; alternate mark. R145 carries the post-translational modification Omega-N-methylarginine; alternate. At R149 the chain carries Omega-N-methylarginine. A compositionally biased stretch (gly residues) spans 151-169; that stretch reads GFRGRGNFRGRGGARGGFN. A disordered region spans residues 151–171; it reads GFRGRGNFRGRGGARGGFNGQ. Residues R153, R155, and R159 each carry the dimethylated arginine modification. R161 and R165 each carry dimethylated arginine; alternate. R161 and R165 each carry omega-N-methylarginine; alternate. Positions 186–274 constitute an RRM 2 domain; sequence DTLYINNVPF…RELTVDVAVI (89 aa). T242 carries the phosphothreonine modification. S244 carries the phosphoserine modification. The segment at 275–294 is disordered; it reads RPENDEEEIEQETGSEEKQE. Over residues 278–288 the composition is skewed to acidic residues; sequence NDEEEIEQETG. Position 287 is a phosphothreonine (T287). S289 carries the phosphoserine modification.

This sequence belongs to the RRM GAR family. As to quaternary structure, associated with snR10 and snR11 small nuclear RNAs.

It is found in the cytoplasm. Its subcellular location is the nucleus. The protein resides in the nucleolus. The protein localises to the P-body. It localises to the stress granule. Its function is as follows. Functions in the transition of mRNAs from translation to an mRNP complex destined for decapping. High-copy-number suppressor of decapping defects. Overexpression suppresses decapping defects in both DCP1-2 and DCP2-7 mutations. Acts to promote translational repression of mRNA in conjunction with DHH1 and subsequent mRNA localization to P bodies. Promotes translational repression of mRNA during glucose deprivation. In Saccharomyces cerevisiae (strain ATCC 204508 / S288c) (Baker's yeast), this protein is Single-stranded nucleic acid-binding protein (SBP1).